The following is a 75-amino-acid chain: Transaldolase (75 aa).

This sequence belongs to the transaldolase family. Type 1 subfamily. Homodimer. Phosphorylated. As to expression, predominantly expressed in Y-organs.

The protein localises to the cytoplasm. It catalyses the reaction D-sedoheptulose 7-phosphate + D-glyceraldehyde 3-phosphate = D-erythrose 4-phosphate + beta-D-fructose 6-phosphate. It functions in the pathway carbohydrate degradation; pentose phosphate pathway; D-glyceraldehyde 3-phosphate and beta-D-fructose 6-phosphate from D-ribose 5-phosphate and D-xylulose 5-phosphate (non-oxidative stage): step 2/3. Transaldolase is important for the balance of metabolites in the pentose-phosphate pathway. May play a role in the conversion of sterols into ecdysteroids via NADPH. This is Transaldolase from Carcinus maenas (Common shore crab).